The sequence spans 293 residues: 4-hydroxy-tetrahydrodipicolinate synthase (293 aa).

T45 is a pyruvate binding site. Y133 acts as the Proton donor/acceptor in catalysis. Catalysis depends on K161, which acts as the Schiff-base intermediate with substrate. I203 contributes to the pyruvate binding site.

This sequence belongs to the DapA family. As to quaternary structure, homotetramer; dimer of dimers.

The protein localises to the cytoplasm. It carries out the reaction L-aspartate 4-semialdehyde + pyruvate = (2S,4S)-4-hydroxy-2,3,4,5-tetrahydrodipicolinate + H2O + H(+). Its pathway is amino-acid biosynthesis; L-lysine biosynthesis via DAP pathway; (S)-tetrahydrodipicolinate from L-aspartate: step 3/4. In terms of biological role, catalyzes the condensation of (S)-aspartate-beta-semialdehyde [(S)-ASA] and pyruvate to 4-hydroxy-tetrahydrodipicolinate (HTPA). This chain is 4-hydroxy-tetrahydrodipicolinate synthase, found in Aliivibrio fischeri (strain MJ11) (Vibrio fischeri).